A 249-amino-acid polypeptide reads, in one-letter code: Deoxyribose-phosphate aldolase (249 aa).

D109 (proton donor/acceptor) is an active-site residue. Residue K171 is the Schiff-base intermediate with acetaldehyde of the active site. K200 (proton donor/acceptor) is an active-site residue.

It belongs to the DeoC/FbaB aldolase family. DeoC type 1 subfamily.

It localises to the cytoplasm. It carries out the reaction 2-deoxy-D-ribose 5-phosphate = D-glyceraldehyde 3-phosphate + acetaldehyde. It participates in carbohydrate degradation; 2-deoxy-D-ribose 1-phosphate degradation; D-glyceraldehyde 3-phosphate and acetaldehyde from 2-deoxy-alpha-D-ribose 1-phosphate: step 2/2. In terms of biological role, catalyzes a reversible aldol reaction between acetaldehyde and D-glyceraldehyde 3-phosphate to generate 2-deoxy-D-ribose 5-phosphate. This chain is Deoxyribose-phosphate aldolase, found in Klebsiella pneumoniae subsp. pneumoniae (strain ATCC 700721 / MGH 78578).